The primary structure comprises 470 residues: 3-isopropylmalate dehydratase large subunit (470 aa).

3 residues coordinate [4Fe-4S] cluster: Cys-351, Cys-411, and Cys-414.

It belongs to the aconitase/IPM isomerase family. LeuC type 1 subfamily. In terms of assembly, heterodimer of LeuC and LeuD. [4Fe-4S] cluster serves as cofactor.

It catalyses the reaction (2R,3S)-3-isopropylmalate = (2S)-2-isopropylmalate. It functions in the pathway amino-acid biosynthesis; L-leucine biosynthesis; L-leucine from 3-methyl-2-oxobutanoate: step 2/4. Functionally, catalyzes the isomerization between 2-isopropylmalate and 3-isopropylmalate, via the formation of 2-isopropylmaleate. This Rhodopseudomonas palustris (strain HaA2) protein is 3-isopropylmalate dehydratase large subunit.